The following is a 432-amino-acid chain: Enolase (432 aa).

Gln167 is a binding site for (2R)-2-phosphoglycerate. The Proton donor role is filled by Glu209. Residues Asp246, Glu287, and Asp314 each coordinate Mg(2+). Lys339, Arg368, Ser369, and Lys390 together coordinate (2R)-2-phosphoglycerate. Catalysis depends on Lys339, which acts as the Proton acceptor.

Belongs to the enolase family. It depends on Mg(2+) as a cofactor.

Its subcellular location is the cytoplasm. It localises to the secreted. It is found in the cell surface. It carries out the reaction (2R)-2-phosphoglycerate = phosphoenolpyruvate + H2O. It participates in carbohydrate degradation; glycolysis; pyruvate from D-glyceraldehyde 3-phosphate: step 4/5. In terms of biological role, catalyzes the reversible conversion of 2-phosphoglycerate (2-PG) into phosphoenolpyruvate (PEP). It is essential for the degradation of carbohydrates via glycolysis. The protein is Enolase of Prochlorococcus marinus (strain SARG / CCMP1375 / SS120).